Here is a 297-residue protein sequence, read N- to C-terminus: Phosphatidylinositol N-acetylglucosaminyltransferase subunit C (297 aa).

4 helical membrane-spanning segments follow: residues 67 to 87 (VFVV…WLFG), 88 to 108 (TGLA…GGDG), 153 to 173 (SVFM…AAIV), and 239 to 259 (AFGG…LLLF).

The protein belongs to the PIGC family. Component of the glycosylphosphatidylinositol-N-acetylglucosaminyltransferase (GPI-GnT) complex composed at least by PIGA, PIGC, PIGH, PIGP, PIGQ, PIGY and DPM2. Interacts with PIGQ. Interacts with the heterodimer PIGA:PIGH.

It is found in the endoplasmic reticulum membrane. It functions in the pathway glycolipid biosynthesis; glycosylphosphatidylinositol-anchor biosynthesis. Functionally, part of the glycosylphosphatidylinositol-N-acetylglucosaminyltransferase (GPI-GnT) complex that catalyzes the transfer of N-acetylglucosamine from UDP-N-acetylglucosamine to phosphatidylinositol and participates in the first step of GPI biosynthesis. The chain is Phosphatidylinositol N-acetylglucosaminyltransferase subunit C from Rattus norvegicus (Rat).